The chain runs to 125 residues: UPF0738 protein GTNG_0708 (125 aa).

Belongs to the UPF0738 family.

The sequence is that of UPF0738 protein GTNG_0708 from Geobacillus thermodenitrificans (strain NG80-2).